Consider the following 351-residue polypeptide: Nitronate monooxygenase (351 aa).

Residues L21, N69, Q176, G181, G218, and 237–240 each bind FMN; that span reads QMGT.

Belongs to the nitronate monooxygenase family. NMO class I subfamily. FMN serves as cofactor.

It catalyses the reaction 3 propionate 3-nitronate + 3 O2 + H2O = 3 3-oxopropanoate + 2 nitrate + nitrite + H2O2 + 3 H(+). Functionally, nitronate monooxygenase that uses molecular oxygen to catalyze the oxidative denitrification of alkyl nitronates. The toxin propionate 3-nitronate (P3N) is the best substrate (and the presumed physiological substrate), but this enzyme is also active on other primary and secondary nitronates such as propyl-1-nitronate, ethylnitronate, pentyl-1-nitronate, butyl-1-nitronate and propyl-2-nitronate. Is likely involved in the degradation of P3N, that allows P.aeruginosa PAO1 to grow on 3-nitropropionate/P3N as the sole nitrogen source. Also functions in the detoxification of P3N, a metabolic poison produced by plants and fungi as a defense mechanism. Cannot oxidize nitroalkanes such as 3-nitropropionate, nitroethane, 1-nitropropane, 1-nitrobutane, 1-nitropentane, or 2-nitropropane. This chain is Nitronate monooxygenase, found in Pseudomonas aeruginosa (strain ATCC 15692 / DSM 22644 / CIP 104116 / JCM 14847 / LMG 12228 / 1C / PRS 101 / PAO1).